Consider the following 569-residue polypeptide: 2-isopropylmalate synthase (569 aa).

Positions 31–305 (PRWMSTDLRD…APELDFSDID (275 aa)) constitute a Pyruvate carboxyltransferase domain. 4 residues coordinate Mg(2+): Asp40, His244, His246, and Asn280. The tract at residues 437-569 (RETPLRYVSH…TASASAATEA (133 aa)) is regulatory domain.

The protein belongs to the alpha-IPM synthase/homocitrate synthase family. LeuA type 2 subfamily. As to quaternary structure, homodimer. Mg(2+) is required as a cofactor.

It localises to the cytoplasm. It carries out the reaction 3-methyl-2-oxobutanoate + acetyl-CoA + H2O = (2S)-2-isopropylmalate + CoA + H(+). Its pathway is amino-acid biosynthesis; L-leucine biosynthesis; L-leucine from 3-methyl-2-oxobutanoate: step 1/4. Catalyzes the condensation of the acetyl group of acetyl-CoA with 3-methyl-2-oxobutanoate (2-ketoisovalerate) to form 3-carboxy-3-hydroxy-4-methylpentanoate (2-isopropylmalate). This chain is 2-isopropylmalate synthase, found in Cupriavidus taiwanensis (strain DSM 17343 / BCRC 17206 / CCUG 44338 / CIP 107171 / LMG 19424 / R1) (Ralstonia taiwanensis (strain LMG 19424)).